Reading from the N-terminus, the 104-residue chain is Large ribosomal subunit protein uL24 (104 aa).

This sequence belongs to the universal ribosomal protein uL24 family. Part of the 50S ribosomal subunit.

In terms of biological role, one of two assembly initiator proteins, it binds directly to the 5'-end of the 23S rRNA, where it nucleates assembly of the 50S subunit. One of the proteins that surrounds the polypeptide exit tunnel on the outside of the subunit. The protein is Large ribosomal subunit protein uL24 of Shewanella baltica (strain OS223).